The sequence spans 156 residues: Small ribosomal subunit protein uS7 (156 aa).

The protein belongs to the universal ribosomal protein uS7 family. In terms of assembly, part of the 30S ribosomal subunit. Contacts proteins S9 and S11.

Functionally, one of the primary rRNA binding proteins, it binds directly to 16S rRNA where it nucleates assembly of the head domain of the 30S subunit. Is located at the subunit interface close to the decoding center, probably blocks exit of the E-site tRNA. This is Small ribosomal subunit protein uS7 from Erythrobacter litoralis (strain HTCC2594).